The following is a 112-amino-acid chain: UPF0342 protein SSU05_1260 (112 aa).

This sequence belongs to the UPF0342 family.

The polypeptide is UPF0342 protein SSU05_1260 (Streptococcus suis (strain 05ZYH33)).